A 266-amino-acid polypeptide reads, in one-letter code: Mitochondrial genome maintenance protein MGM101 (266 aa).

A mitochondrion-targeting transit peptide spans 1–23; the sequence is MLHSTKLVFRATPQALCFPVRSY. 2 stretches are compositionally biased toward polar residues: residues 37–47 and 57–68; these read KTTSKLAPSIT and PSLQEPQSATST. Positions 37 to 68 are disordered; that stretch reads KTTSKLAPSITTEDEVAEQDPSLQEPQSATST.

It belongs to the MGM101 family. As to quaternary structure, forms homooligomers in vitro.

It is found in the mitochondrion matrix. The protein resides in the mitochondrion nucleoid. Its function is as follows. Plays a role in the replication of the mitochondrial genome and the maintenance of its telomeres. Able to catalyze strand annealing and D-loop formation. Binds a wide variety of DNA substrates. Exhibited the highest affinity for DNA molecules carrying 3' ssDNA overhangs (Y-form, 3' FLAP, 3' overhang) and for substrates with complex structures (X-O and Fork). Forms homogeneous ring-shaped structures at the ssDNA native telomeres ends. Oligomers seem to bind to the ssDNA as a filament until they reach the double-stranded region and induce the formation of bends and loops within the double-stranded part of the molecules. In Candida parapsilosis (strain CDC 317 / ATCC MYA-4646) (Yeast), this protein is Mitochondrial genome maintenance protein MGM101.